We begin with the raw amino-acid sequence, 144 residues long: Large ribosomal subunit protein uL13 (144 aa).

The protein belongs to the universal ribosomal protein uL13 family. Part of the 50S ribosomal subunit.

Functionally, this protein is one of the early assembly proteins of the 50S ribosomal subunit, although it is not seen to bind rRNA by itself. It is important during the early stages of 50S assembly. This is Large ribosomal subunit protein uL13 from Nitrosospira multiformis (strain ATCC 25196 / NCIMB 11849 / C 71).